Reading from the N-terminus, the 356-residue chain is uncharacterized protein (356 aa).

Positions 1–21 are cleaved as a signal peptide; the sequence is MKLITAPCRALLALPFCYAFS.

This is an uncharacterized protein from Escherichia coli (strain K12).